Consider the following 267-residue polypeptide: 4-hydroxy-tetrahydrodipicolinate reductase (267 aa).

NAD(+)-binding positions include 8–13 (GAAGRM) and aspartate 34. Residue arginine 35 participates in NADP(+) binding. NAD(+) contacts are provided by residues 98-100 (GTT) and 122-125 (AANF). Histidine 155 functions as the Proton donor/acceptor in the catalytic mechanism. Residue histidine 156 coordinates (S)-2,3,4,5-tetrahydrodipicolinate. Lysine 159 acts as the Proton donor in catalysis. 165-166 (GT) is a (S)-2,3,4,5-tetrahydrodipicolinate binding site.

It belongs to the DapB family.

The protein resides in the cytoplasm. The catalysed reaction is (S)-2,3,4,5-tetrahydrodipicolinate + NAD(+) + H2O = (2S,4S)-4-hydroxy-2,3,4,5-tetrahydrodipicolinate + NADH + H(+). The enzyme catalyses (S)-2,3,4,5-tetrahydrodipicolinate + NADP(+) + H2O = (2S,4S)-4-hydroxy-2,3,4,5-tetrahydrodipicolinate + NADPH + H(+). Its pathway is amino-acid biosynthesis; L-lysine biosynthesis via DAP pathway; (S)-tetrahydrodipicolinate from L-aspartate: step 4/4. In terms of biological role, catalyzes the conversion of 4-hydroxy-tetrahydrodipicolinate (HTPA) to tetrahydrodipicolinate. This is 4-hydroxy-tetrahydrodipicolinate reductase from Ectopseudomonas mendocina (strain ymp) (Pseudomonas mendocina).